The chain runs to 165 residues: Large ribosomal subunit protein uL10 (165 aa).

It belongs to the universal ribosomal protein uL10 family. Part of the ribosomal stalk of the 50S ribosomal subunit. The N-terminus interacts with L11 and the large rRNA to form the base of the stalk. The C-terminus forms an elongated spine to which L12 dimers bind in a sequential fashion forming a multimeric L10(L12)X complex.

Its function is as follows. Forms part of the ribosomal stalk, playing a central role in the interaction of the ribosome with GTP-bound translation factors. The sequence is that of Large ribosomal subunit protein uL10 from Shewanella pealeana (strain ATCC 700345 / ANG-SQ1).